Consider the following 781-residue polypeptide: Sialidase (781 aa).

A signal peptide spans 1–24 (MRFKNVKKTALMLAMFGMATSSNA). Arg-224 serves as a coordination point for substrate. Asp-250 functions as the Proton acceptor in the catalytic mechanism. BNR repeat units lie at residues 263–274 (RTSRDGGITWDT) and 585–596 (IYSDDGGSNWQT). Glu-619 is an active-site residue. Arg-635 is a substrate binding site. One copy of the BNR 3 repeat lies at 653–664 (FLSKDGGITWSL). Arg-712 provides a ligand contact to substrate. A BNR 4 repeat occupies 718–729 (WFSFDEGVTWKG). The active-site Nucleophile is the Tyr-740.

The protein belongs to the glycosyl hydrolase 33 family. As to quaternary structure, monomer. It depends on Ca(2+) as a cofactor.

Its subcellular location is the secreted. It carries out the reaction Hydrolysis of alpha-(2-&gt;3)-, alpha-(2-&gt;6)-, alpha-(2-&gt;8)- glycosidic linkages of terminal sialic acid residues in oligosaccharides, glycoproteins, glycolipids, colominic acid and synthetic substrates.. Functionally, cleaves the terminal sialic acid (N-acetyl neuraminic acid) from carbohydrate chains in glycoproteins providing free sialic acid which can be used as carbon and energy sources. Sialidases have been suggested to be pathogenic factors in microbial infections. Facilitates cholera toxin binding to host intestinal epithelial cells by converting cell surface polysialogangliosides to GM1 monogangliosides. The sequence is that of Sialidase (nanH) from Vibrio cholerae serotype O1 (strain ATCC 39541 / Classical Ogawa 395 / O395).